The following is a 704-amino-acid chain: Cystathionine beta-synthase cbs-1 (704 aa).

Pyridoxal 5'-phosphate-binding positions include Asn454, 562–566 (GTGGT), and Ser652.

It belongs to the cysteine synthase/cystathionine beta-synthase family. As to quaternary structure, monomer. In terms of assembly, does not bind pyridoxal 5'-phosphate, PLP; which may explain why this isoform has virtually undetectable catalytic activity. Pyridoxal 5'-phosphate is required as a cofactor.

It is found in the cytoplasm. It catalyses the reaction L-homocysteine + L-serine = L,L-cystathionine + H2O. It functions in the pathway amino-acid biosynthesis; L-cysteine biosynthesis; L-cysteine from L-homocysteine and L-serine: step 1/2. In terms of biological role, hydro-lyase catalyzing the first step of the transsulfuration pathway, where the hydroxyl group of L-serine is displaced by L-homocysteine in a beta-replacement reaction to form L-cystathionine, the precursor of L-cysteine. Plays a role in maintaining homocysteine homeostasis. Involved in cold-induced somatic longevity mediated by prostaglandin E2 (PGE2) signals from adult germ cells, perhaps acting via a role in the production of hydrogen sulfide (H2S). Required for normal development. The polypeptide is Cystathionine beta-synthase cbs-1 (Caenorhabditis elegans).